Consider the following 948-residue polypeptide: MDKTYQPHAIETSWYQTWESENYFAPQGVGDSYTIMIPPPNVTGSLHMGHGFNNAIMDALIRFRRMQGRNTLWQPGTDHAGIATQMLVERRLEAQGISRHELGREKFLDKIWEWKAESGGNISRQIRRLGSSVDWSRERFTMDDGLSDAVKEAFVRLHEDGLIYRGKRLVNWDTKLHTAISDLEVENHDEKGHLWNLRYPLADGAKTAEGLDYLIVATTRPETMLGDAAVAVNPQDERYKALIGKFVELPLVGRRIPIIADDYCDPEFGTGCVKITPAHDFNDYEVGKRHNLPLLNIFDKNANVLAAAQVFNLDGTLNESVDGSLPAAYAGLDRFEARKQIVAAFDAAGLLVSVDDHALKVPKGDRSGTIIEPWLTDQWYVSTKPLAEPAIAAVEDGRIAFVPKQYENMYFSWMRDIQDWCISRQLWWGHRIPAWYDESGKVYVGRDEAEVRAKNNLGPEIALQQDNDVLDTWFSSGLWTFSTLGWPEKTKALETFHSTDVLVTGFDIIFFWVARMIMLTMHLVKNEDGTPQVPFKTVYVHGLVRDGQGQKMSKSKGNVLDPLDIVDGIDLETLVEKRTSGLMQPQLAKKIEKQTRQEFADGIASYGTDALRFTFCSLASTGRDIKFDMGRVEGYRNFCNKIWNAARYVLDKGEDCGQNGEAVELSLADRWIISQLQRTEAEVTRQLDQFRFDLAAQALYEFIWNQYCDWYLELSKPVLWDETAPVERQRGTRRTLVRVLEVALRLAHPFMPFITEEIWQRLAPLAGAQGKTIMLQPWPVANEARIDQAAEDDIEWLKGLMLAVRNIRGEMNIGPGKPLQLFLKNVSAEDQRRLSENDYLLKKLAKLESMTVLTEGAEAPLSATALVGDMEVLVPMAGLIDKGAELARLDKEIQRLQGEVQRVGGKLSNAAFVDKAPPEVIAKERAKLTEAEQALGKLAEQHARIASL.

Residues 40-50 (PNVTGSLHMGH) carry the 'HIGH' region motif. The short motif at 551–555 (KMSKS) is the 'KMSKS' region element. Lys554 contributes to the ATP binding site. A coiled-coil region spans residues 879–945 (LIDKGAELAR…GKLAEQHARI (67 aa)).

It belongs to the class-I aminoacyl-tRNA synthetase family. ValS type 1 subfamily. Monomer.

The protein resides in the cytoplasm. It carries out the reaction tRNA(Val) + L-valine + ATP = L-valyl-tRNA(Val) + AMP + diphosphate. Functionally, catalyzes the attachment of valine to tRNA(Val). As ValRS can inadvertently accommodate and process structurally similar amino acids such as threonine, to avoid such errors, it has a 'posttransfer' editing activity that hydrolyzes mischarged Thr-tRNA(Val) in a tRNA-dependent manner. This Pseudomonas savastanoi pv. phaseolicola (strain 1448A / Race 6) (Pseudomonas syringae pv. phaseolicola (strain 1448A / Race 6)) protein is Valine--tRNA ligase.